The chain runs to 214 residues: MLGLFRKLLPREDRFFDLFADHSRTVMGAAEALNALLAGGPDIESHCDRIVALENEADEITREVLLAVRRSFITPFDRGDIKDLIQSMDDAIDMMHKTVKTIRLYEQKSFDPGMQAMGAAVVEAAHLVAEAIPLLSRIGANAHRLSAIAEEVTHVEDRSDQLHEQGLKDLFQRHGASNPMAYIIGSEIYGELEKVVDRFEDVANEISGIVIENV.

Belongs to the UPF0111 family.

Its function is as follows. Could be involved in orthophosphate transport. The protein is Putative pit accessory protein of Rhizobium meliloti (strain 1021) (Ensifer meliloti).